A 391-amino-acid polypeptide reads, in one-letter code: Phosphoglycerate kinase (391 aa).

Residues 21–23, R36, 59–62, R113, and R146 contribute to the substrate site; these read DLN and HLGR. Residues K197, E319, and 345–348 each bind ATP; that span reads GGDT.

Belongs to the phosphoglycerate kinase family. As to quaternary structure, monomer.

It is found in the cytoplasm. The enzyme catalyses (2R)-3-phosphoglycerate + ATP = (2R)-3-phospho-glyceroyl phosphate + ADP. It functions in the pathway carbohydrate degradation; glycolysis; pyruvate from D-glyceraldehyde 3-phosphate: step 2/5. The chain is Phosphoglycerate kinase from Shewanella halifaxensis (strain HAW-EB4).